A 158-amino-acid polypeptide reads, in one-letter code: Transcription elongation factor GreA (158 aa).

Residues 53-73 (EQQGFIEGRIKEIEAKLSNAQ) are a coiled coil.

Belongs to the GreA/GreB family.

Necessary for efficient RNA polymerase transcription elongation past template-encoded arresting sites. The arresting sites in DNA have the property of trapping a certain fraction of elongating RNA polymerases that pass through, resulting in locked ternary complexes. Cleavage of the nascent transcript by cleavage factors such as GreA or GreB allows the resumption of elongation from the new 3'terminus. GreA releases sequences of 2 to 3 nucleotides. The sequence is that of Transcription elongation factor GreA from Thioalkalivibrio sulfidiphilus (strain HL-EbGR7).